A 144-amino-acid polypeptide reads, in one-letter code: MNFKYIVAVSFLIASAYARSVQNDEQSLSQRDVLEEESLREIRGIGGALLSAGKSALKGLAKGLAEHFASGKRTAEDHEVMKRLEAVMRDLDSLDYPEEATERETRGFNQEEIANLFTKKEKRILGPVLGLVGNALGGLLKNLG.

A signal peptide spans 1–18; sequence MNFKYIVAVSFLIASAYA. Residues 19-43 constitute a propeptide that is removed on maturation; sequence RSVQNDEQSLSQRDVLEEESLREIR. Residue Ser70 is modified to Serine amide. A propeptide spanning residues 74–123 is cleaved from the precursor; that stretch reads TAEDHEVMKRLEAVMRDLDSLDYPEEATERETRGFNQEEIANLFTKKEKR. At Leu143 the chain carries Leucine amide.

The protein belongs to the bombinin family. Expressed by the skin glands.

The protein resides in the secreted. Maximin-10 shows antimicrobial activity against bacteria and against the fungus C.albicans. It has little hemolytic activity. In terms of biological role, maximin-H15 shows antimicrobial activity against bacteria and against the fungus C.albicans. Shows strong hemolytic activity. This is Maximins 10/H15 from Bombina maxima (Giant fire-bellied toad).